The sequence spans 544 residues: Chaperonin GroEL (544 aa).

Residues 29-32 (TLGP), 86-90 (DGTTT), Gly-413, 476-478 (NAA), and Asp-492 contribute to the ATP site.

Belongs to the chaperonin (HSP60) family. Forms a cylinder of 14 subunits composed of two heptameric rings stacked back-to-back. Interacts with the co-chaperonin GroES.

It is found in the cytoplasm. The enzyme catalyses ATP + H2O + a folded polypeptide = ADP + phosphate + an unfolded polypeptide.. Functionally, together with its co-chaperonin GroES, plays an essential role in assisting protein folding. The GroEL-GroES system forms a nano-cage that allows encapsulation of the non-native substrate proteins and provides a physical environment optimized to promote and accelerate protein folding. This is Chaperonin GroEL from Bacillus pumilus (strain SAFR-032).